Here is a 183-residue protein sequence, read N- to C-terminus: dCTP deaminase, dUMP-forming (183 aa).

Residues 99-104 (KSSIAR), Asp117, 125-127 (TLE), Gln146, Tyr159, Lys166, and Gln170 each bind dCTP. The active-site Proton donor/acceptor is the Glu127.

The protein belongs to the dCTP deaminase family. As to quaternary structure, homotrimer.

It catalyses the reaction dCTP + 2 H2O = dUMP + NH4(+) + diphosphate. Its pathway is pyrimidine metabolism; dUMP biosynthesis; dUMP from dCTP: step 1/1. Bifunctional enzyme that catalyzes both the deamination of dCTP to dUTP and the hydrolysis of dUTP to dUMP without releasing the toxic dUTP intermediate. In Methanoregula boonei (strain DSM 21154 / JCM 14090 / 6A8), this protein is dCTP deaminase, dUMP-forming.